Consider the following 427-residue polypeptide: Glycophorin-binding protein-related antigen (427 aa).

GBP repeat units lie at residues 109 to 149 (LTSA…DELE), 150 to 189 (TSADPEGQIMKAYAADPEYRKHLNVLYQILNNTDPNDEVE), 190 to 229 (SSADPEGQIMKAYAADPEYRKHVNVLYQILNNTDPNDELE), 230 to 269 (TSADPEGQIMKAYAADPEYRKHVNVLYQILNHTDSSEVET), 270 to 307 (SADPEGQIMKAYAADPEYRKHVNVLYQILNHTDSSEVE), 308 to 347 (TSADPEGQIMKAYAADPEYRKHVNVLYQILNNTDPNDELE), 348 to 387 (TSADPEGQIMKAYAADPEYRKHVNVLYQILNNTDPNDELE), and 388 to 427 (TSADPEGQIMKAYAADPEYRKHVNVLYQILNNTDPNDESS).

This chain is Glycophorin-binding protein-related antigen (GBPH), found in Plasmodium falciparum (isolate FCBR / Columbia).